A 91-amino-acid polypeptide reads, in one-letter code: DNA-directed RNA polymerase subunit omega (91 aa).

It belongs to the RNA polymerase subunit omega family. In terms of assembly, the RNAP catalytic core consists of 2 alpha, 1 beta, 1 beta' and 1 omega subunit. When a sigma factor is associated with the core the holoenzyme is formed, which can initiate transcription.

It carries out the reaction RNA(n) + a ribonucleoside 5'-triphosphate = RNA(n+1) + diphosphate. Functionally, promotes RNA polymerase assembly. Latches the N- and C-terminal regions of the beta' subunit thereby facilitating its interaction with the beta and alpha subunits. The polypeptide is DNA-directed RNA polymerase subunit omega (Yersinia pestis bv. Antiqua (strain Antiqua)).